We begin with the raw amino-acid sequence, 397 residues long: Pyruvate dehydrogenase E1 component subunit alpha, mitochondrial (397 aa).

His98, Tyr124, Arg125, Gly173, Val175, Asp204, Gly205, Ala206, Asn233, and Tyr235 together coordinate pyruvate. 8 residues coordinate thiamine diphosphate: Tyr124, Arg125, Gly173, Val175, Asp204, Gly205, Ala206, and Asn233. Asp204 is a binding site for Mg(2+). Positions 233 and 235 each coordinate Mg(2+). His299 lines the thiamine diphosphate pocket.

In terms of assembly, tetramer of 2 alpha and 2 beta subunits. Requires thiamine diphosphate as cofactor. It depends on Mg(2+) as a cofactor.

It localises to the mitochondrion matrix. The enzyme catalyses N(6)-[(R)-lipoyl]-L-lysyl-[protein] + pyruvate + H(+) = N(6)-[(R)-S(8)-acetyldihydrolipoyl]-L-lysyl-[protein] + CO2. With respect to regulation, E1 activity is regulated by phosphorylation (inactivation) and dephosphorylation (activation) of the alpha subunit. The pyruvate dehydrogenase complex catalyzes the overall conversion of pyruvate to acetyl-CoA and CO(2). It contains multiple copies of three enzymatic components: pyruvate dehydrogenase (E1), dihydrolipoamide acetyltransferase (E2) and lipoamide dehydrogenase (E3). This Pisum sativum (Garden pea) protein is Pyruvate dehydrogenase E1 component subunit alpha, mitochondrial.